The primary structure comprises 105 residues: Secreted effector protein PINE1 (105 aa).

Positions Met-1–Ala-21 are cleaved as a signal peptide.

Interacts with Arabidopsis thaliana PGIP1.

The protein localises to the secreted. Functionally, effector protein required for full virulence. Directly interacts with and functionally inactivates PG-inhibiting proteins (PGIPs). PGIPs are a defense mechanism of infected plants, that inhibit the plant pathogens secreted polygalacturonases (PGs) used to degrade the plant cell wall. Excerts its function by interacting with host PGIPs to negate their polygalacturonase-inhibiting function via enhanced dissociation of PGIPs from PGs. The polypeptide is Secreted effector protein PINE1 (Sclerotinia sclerotiorum (strain ATCC 18683 / 1980 / Ss-1) (White mold)).